The following is a 202-amino-acid chain: Nucleoside triphosphate pyrophosphatase (202 aa).

Asp-79 functions as the Proton acceptor in the catalytic mechanism.

It belongs to the Maf family. The cofactor is a divalent metal cation.

Its subcellular location is the cytoplasm. The enzyme catalyses a ribonucleoside 5'-triphosphate + H2O = a ribonucleoside 5'-phosphate + diphosphate + H(+). It carries out the reaction a 2'-deoxyribonucleoside 5'-triphosphate + H2O = a 2'-deoxyribonucleoside 5'-phosphate + diphosphate + H(+). Its function is as follows. Nucleoside triphosphate pyrophosphatase. May have a dual role in cell division arrest and in preventing the incorporation of modified nucleotides into cellular nucleic acids. The polypeptide is Nucleoside triphosphate pyrophosphatase (Rhodopseudomonas palustris (strain HaA2)).